Consider the following 323-residue polypeptide: tRNA dimethylallyltransferase (323 aa).

ATP is bound at residue 12–19 (GPTAAGKT). 14 to 19 (TAAGKT) provides a ligand contact to substrate. Interaction with substrate tRNA regions lie at residues 37 to 40 (DSAL) and 161 to 165 (QRLIR).

The protein belongs to the IPP transferase family. As to quaternary structure, monomer. The cofactor is Mg(2+).

It catalyses the reaction adenosine(37) in tRNA + dimethylallyl diphosphate = N(6)-dimethylallyladenosine(37) in tRNA + diphosphate. In terms of biological role, catalyzes the transfer of a dimethylallyl group onto the adenine at position 37 in tRNAs that read codons beginning with uridine, leading to the formation of N6-(dimethylallyl)adenosine (i(6)A). This Pseudomonas syringae pv. tomato (strain ATCC BAA-871 / DC3000) protein is tRNA dimethylallyltransferase.